We begin with the raw amino-acid sequence, 71 residues long: Protein SlyX homolog (71 aa).

The disordered stretch occupies residues 49 to 71; the sequence is KIKESQSSSSMMSNEPEPPPPHY.

This sequence belongs to the SlyX family.

In Pseudoalteromonas translucida (strain TAC 125), this protein is Protein SlyX homolog.